The primary structure comprises 911 residues: Desmoglein-1-gamma (911 aa).

The N-terminal stretch at 1–23 (MDWHSFRIAALLLTSLVVLEVNS) is a signal peptide. A propeptide spanning residues 24 to 49 (EFQIQVRDHNAKNGTIKWHSIRRQKR) is cleaved from the precursor. Cadherin domains follow at residues 50-157 (EWIK…PPVF), 158-269 (SMTT…IPYL), and 270-389 (EQSS…QPGS). The Extracellular segment spans residues 50 to 519 (EWIKFAAACR…PNVDNVHFGP (470 aa)). Residue Asn110 is glycosylated (N-linked (GlcNAc...) (high mannose) asparagine). Asn180 carries an N-linked (GlcNAc...) asparagine glycan. Asn401 carries N-linked (GlcNAc...) asparagine glycosylation. The chain crosses the membrane as a helical span at residues 520 to 540 (AGIGLLIMGFLVLGLVPFLLI). At 541 to 911 (SCDCGGAPGG…GMIGNLSIPP (371 aa)) the chain is on the cytoplasmic side. 4 Desmoglein repeat repeats span residues 783 to 809 (AYPSGPGVQHPMLIPDPLGYGNITVRE), 810 to 839 (SYTTSGTLKPSVHFHDNQQASNVVVTERVV), 840 to 869 (GPISGADLHGMLEIPALRDGTNVIVTERVI), and 870 to 897 (APGSSLPNSLTIPNPRETSNVVVTERVI). The Desmoglein repeat 5; truncated repeat unit spans residues 898-911 (QPTSGMIGNLSIPP).

As to quaternary structure, interacts with DSC3; there is evidence to suggest that the interaction promotes cell-cell adhesion of keratinocytes. Expressed in epidermis, brain, liver, skeletal, muscle and testis.

The protein localises to the cell membrane. Its subcellular location is the cell junction. It is found in the desmosome. It localises to the cytoplasm. The protein resides in the nucleus. Functionally, component of intercellular desmosome junctions. Involved in the interaction of plaque proteins and intermediate filaments mediating cell-cell adhesion. This Mus musculus (Mouse) protein is Desmoglein-1-gamma (Dsg1c).